Here is an 890-residue protein sequence, read N- to C-terminus: Serine/threonine-protein kinase D3 (890 aa).

Phosphoserine occurs at positions 6, 27, 37, 41, and 44. The Phorbol-ester/DAG-type 1 zinc-finger motif lies at 154–204 (PHTLYVHSYKAPTFCDYCGEMLWGLVRQGLKCEGCGLNYHKRCAFKIPNNC). A phosphoserine mark is found at Ser213 and Ser216. The Phorbol-ester/DAG-type 2 zinc finger occupies 271–321 (PHTFAVHSYTRPTICQYCKRLLKGLFRQGMQCKDCKFNCHKRCASKVPRDC). Residues 332-371 (SSLGTDTDIPMDIDNNDINSDSSRGLDDTEEPSPPEDKMF) form a disordered region. Ser364, Ser391, and Ser395 each carry phosphoserine. One can recognise a PH domain in the interval 416–532 (TMVKEGWMVH…WEKAIRQALM (117 aa)). Tyr426 is subject to Phosphotyrosine. Ser442 carries the post-translational modification Phosphoserine. Position 457 is a phosphotyrosine (Tyr457). Phosphothreonine is present on Thr535. A Phosphoserine modification is found at Ser539. Positions 576-832 (IFADEVLGSG…VDKSLSHPWL (257 aa)) constitute a Protein kinase domain. Residues 582–590 (LGSGQFGIV) and Lys605 contribute to the ATP site. Residue Asp699 is the Proton acceptor of the active site. Ser731 is modified (phosphoserine; by PKC). Position 735 is a phosphoserine; by autocatalysis (Ser735). Phosphotyrosine is present on Tyr742.

The protein belongs to the protein kinase superfamily. CAMK Ser/Thr protein kinase family. PKD subfamily. Requires Mg(2+) as cofactor. In terms of tissue distribution, ubiquitous.

The protein localises to the cytoplasm. It is found in the membrane. The catalysed reaction is L-seryl-[protein] + ATP = O-phospho-L-seryl-[protein] + ADP + H(+). The enzyme catalyses L-threonyl-[protein] + ATP = O-phospho-L-threonyl-[protein] + ADP + H(+). Activated by DAG and phorbol esters. Phorbol-ester/DAG-type domains 1 and 2 bind both DAG and phorbol ester with high affinity and mediate translocation to the cell membrane. Autophosphorylation of Ser-735 and phosphorylation of Ser-731 by PKC relieves auto-inhibition by the PH domain. Functionally, converts transient diacylglycerol (DAG) signals into prolonged physiological effects, downstream of PKC. Involved in resistance to oxidative stress. This is Serine/threonine-protein kinase D3 (PRKD3) from Homo sapiens (Human).